Consider the following 46-residue polypeptide: Viscotoxin-1-PS (46 aa).

Intrachain disulfides connect C3-C40, C4-C32, and C16-C26.

This sequence belongs to the plant thionin (TC 1.C.44) family.

The protein resides in the secreted. Functionally, thionins are small plant proteins which are toxic to animal cells. They seem to exert their toxic effect at the level of the cell membrane. Their precise function is not known. This Viscum album (European mistletoe) protein is Viscotoxin-1-PS (THI2.4).